The following is a 496-amino-acid chain: Angiopoietin-2 (496 aa).

The first 18 residues, 1 to 18, serve as a signal peptide directing secretion; the sequence is MWQIIFLTFGWDLVLASA. N-linked (GlcNAc...) asparagine glycosylation is found at N89, N119, N133, N151, N240, and N304. Residues 159 to 256 are a coiled coil; it reads QLLQHSISTN…QQHDLMETVN (98 aa). A Fibrinogen C-terminal domain is found at 275-495; it reads KEEQTTFRDC…ATTMMIRPAD (221 aa). A disulfide bridge connects residues C284 and C313. Residues D429, D431, C433, and C435 each coordinate Ca(2+). Intrachain disulfides connect C433–C435 and C437–C450.

Interacts with TEK/TIE2, competing for the same binding site as ANGPT1. Interacts with ITGA5. Interacts with SVEP1/polydom. Interacts with THBD; this interaction significantly inhibits the generation of activated PC and TAFIa/CPB2 by the thrombin/thrombomodulin complex. In terms of tissue distribution, expressed in the ovary, uterus and placenta.

It localises to the secreted. In terms of biological role, binds to TEK/TIE2, competing for the ANGPT1 binding site, and modulating ANGPT1 signaling. Can induce tyrosine phosphorylation of TEK/TIE2 in the absence of ANGPT1. In the absence of angiogenic inducers, such as VEGF, ANGPT2-mediated loosening of cell-matrix contacts may induce endothelial cell apoptosis with consequent vascular regression. In concert with VEGF, it may facilitate endothelial cell migration and proliferation, thus serving as a permissive angiogenic signal. Involved in the regulation of lymphangiogenesis. This Mus musculus (Mouse) protein is Angiopoietin-2 (Angpt2).